The sequence spans 394 residues: uncharacterized protein (394 aa).

Helical transmembrane passes span 13–33, 35–55, 73–95, 110–130, 152–172, 179–198, 216–236, 241–261, 267–287, 293–313, 340–360, and 372–392; these read LITT…TTMI, MAPT…VLPT, TTMT…TLTV, ALTV…HMVL, IHMV…PTVL, LMVL…TLTV, VLLA…TVLP, VLMV…HMVL, VLMV…PTVL, VLMV…TLTV, MMTL…VTTI, and ILLC…YVSA.

It is found in the membrane. This is an uncharacterized protein from Saccharomyces cerevisiae (strain ATCC 204508 / S288c) (Baker's yeast).